We begin with the raw amino-acid sequence, 179 residues long: Large ribosomal subunit protein uL5 (179 aa).

Belongs to the universal ribosomal protein uL5 family. Part of the 50S ribosomal subunit; part of the 5S rRNA/L5/L18/L25 subcomplex. Contacts the 5S rRNA and the P site tRNA. Forms a bridge to the 30S subunit in the 70S ribosome.

This is one of the proteins that bind and probably mediate the attachment of the 5S RNA into the large ribosomal subunit, where it forms part of the central protuberance. In the 70S ribosome it contacts protein S13 of the 30S subunit (bridge B1b), connecting the 2 subunits; this bridge is implicated in subunit movement. Contacts the P site tRNA; the 5S rRNA and some of its associated proteins might help stabilize positioning of ribosome-bound tRNAs. In Janthinobacterium sp. (strain Marseille) (Minibacterium massiliensis), this protein is Large ribosomal subunit protein uL5.